The primary structure comprises 362 residues: UDP-N-acetylglucosamine--N-acetylmuramyl-(pentapeptide) pyrophosphoryl-undecaprenol N-acetylglucosamine transferase (362 aa).

UDP-N-acetyl-alpha-D-glucosamine-binding positions include 14 to 16, arginine 170, serine 199, and glutamine 289; that span reads TGG.

It belongs to the glycosyltransferase 28 family. MurG subfamily.

The protein resides in the cell inner membrane. It carries out the reaction di-trans,octa-cis-undecaprenyl diphospho-N-acetyl-alpha-D-muramoyl-L-alanyl-D-glutamyl-meso-2,6-diaminopimeloyl-D-alanyl-D-alanine + UDP-N-acetyl-alpha-D-glucosamine = di-trans,octa-cis-undecaprenyl diphospho-[N-acetyl-alpha-D-glucosaminyl-(1-&gt;4)]-N-acetyl-alpha-D-muramoyl-L-alanyl-D-glutamyl-meso-2,6-diaminopimeloyl-D-alanyl-D-alanine + UDP + H(+). It functions in the pathway cell wall biogenesis; peptidoglycan biosynthesis. Its function is as follows. Cell wall formation. Catalyzes the transfer of a GlcNAc subunit on undecaprenyl-pyrophosphoryl-MurNAc-pentapeptide (lipid intermediate I) to form undecaprenyl-pyrophosphoryl-MurNAc-(pentapeptide)GlcNAc (lipid intermediate II). The sequence is that of UDP-N-acetylglucosamine--N-acetylmuramyl-(pentapeptide) pyrophosphoryl-undecaprenol N-acetylglucosamine transferase from Borrelia turicatae (strain 91E135).